We begin with the raw amino-acid sequence, 213 residues long: 3-demethoxyubiquinol 3-hydroxylase (213 aa).

Positions 62, 92, 95, 144, 176, and 179 each coordinate Fe cation.

Belongs to the COQ7 family. Fe cation is required as a cofactor.

It localises to the cell membrane. The enzyme catalyses a 5-methoxy-2-methyl-3-(all-trans-polyprenyl)benzene-1,4-diol + AH2 + O2 = a 3-demethylubiquinol + A + H2O. The protein operates within cofactor biosynthesis; ubiquinone biosynthesis. In terms of biological role, catalyzes the hydroxylation of 2-nonaprenyl-3-methyl-6-methoxy-1,4-benzoquinol during ubiquinone biosynthesis. The chain is 3-demethoxyubiquinol 3-hydroxylase from Psychrobacter sp. (strain PRwf-1).